The sequence spans 348 residues: D-alanine--D-alanine ligase (348 aa).

The region spanning 132 to 334 is the ATP-grasp domain; the sequence is KRVLESAGIP…YSDLIEELVS (203 aa). 162-217 is an ATP binding site; sequence LETLSFPIFVKPANMGSSVGISKAESIEGLREAIALALKYDSRILIEQGVVAREIE. Residues Asp288, Glu301, and Asn303 each coordinate Mg(2+).

It belongs to the D-alanine--D-alanine ligase family. Requires Mg(2+) as cofactor. The cofactor is Mn(2+).

It localises to the cytoplasm. It catalyses the reaction 2 D-alanine + ATP = D-alanyl-D-alanine + ADP + phosphate + H(+). Its pathway is cell wall biogenesis; peptidoglycan biosynthesis. In terms of biological role, cell wall formation. This chain is D-alanine--D-alanine ligase, found in Streptococcus uberis (strain ATCC BAA-854 / 0140J).